The primary structure comprises 201 residues: Holliday junction branch migration complex subunit RuvA (201 aa).

The segment at Met-1–Ala-64 is domain I. The domain II stretch occupies residues Glu-65 to Pro-143. Residues Leu-144 to Ala-152 are flexible linker. The segment at Thr-153–Val-201 is domain III.

Belongs to the RuvA family. In terms of assembly, homotetramer. Forms an RuvA(8)-RuvB(12)-Holliday junction (HJ) complex. HJ DNA is sandwiched between 2 RuvA tetramers; dsDNA enters through RuvA and exits via RuvB. An RuvB hexamer assembles on each DNA strand where it exits the tetramer. Each RuvB hexamer is contacted by two RuvA subunits (via domain III) on 2 adjacent RuvB subunits; this complex drives branch migration. In the full resolvosome a probable DNA-RuvA(4)-RuvB(12)-RuvC(2) complex forms which resolves the HJ.

It localises to the cytoplasm. In terms of biological role, the RuvA-RuvB-RuvC complex processes Holliday junction (HJ) DNA during genetic recombination and DNA repair, while the RuvA-RuvB complex plays an important role in the rescue of blocked DNA replication forks via replication fork reversal (RFR). RuvA specifically binds to HJ cruciform DNA, conferring on it an open structure. The RuvB hexamer acts as an ATP-dependent pump, pulling dsDNA into and through the RuvAB complex. HJ branch migration allows RuvC to scan DNA until it finds its consensus sequence, where it cleaves and resolves the cruciform DNA. In Pseudomonas aeruginosa (strain LESB58), this protein is Holliday junction branch migration complex subunit RuvA.